The following is an 886-amino-acid chain: DNA mismatch repair protein MutS (886 aa).

Position 627–634 (627–634 (GPNMGGKS)) interacts with ATP. Residues 834–857 (VECADAPAPSDATHPALDRLRDID) are disordered.

This sequence belongs to the DNA mismatch repair MutS family.

In terms of biological role, this protein is involved in the repair of mismatches in DNA. It is possible that it carries out the mismatch recognition step. This protein has a weak ATPase activity. The sequence is that of DNA mismatch repair protein MutS from Burkholderia vietnamiensis (strain G4 / LMG 22486) (Burkholderia cepacia (strain R1808)).